The following is a 48-amino-acid chain: MTNSSSPLQAVEVRTYPIFTVRWLAVHALAIPTVFFLGAIAAMQFIRR.

A helical transmembrane segment spans residues 23-39 (WLAVHALAIPTVFFLGA). A heme-binding site is contributed by His-27.

This sequence belongs to the PsbE/PsbF family. Heterodimer of an alpha subunit and a beta subunit. PSII is composed of 1 copy each of membrane proteins PsbA, PsbB, PsbC, PsbD, PsbE, PsbF, PsbH, PsbI, PsbJ, PsbK, PsbL, PsbM, PsbT, PsbX, PsbY, Psb30/Ycf12, peripheral proteins PsbO, CyanoQ (PsbQ), PsbU, PsbV and a large number of cofactors. It forms dimeric complexes. The cofactor is heme b.

It localises to the cellular thylakoid membrane. This b-type cytochrome is tightly associated with the reaction center of photosystem II (PSII). PSII is a light-driven water:plastoquinone oxidoreductase that uses light energy to abstract electrons from H(2)O, generating O(2) and a proton gradient subsequently used for ATP formation. It consists of a core antenna complex that captures photons, and an electron transfer chain that converts photonic excitation into a charge separation. The protein is Cytochrome b559 subunit beta of Prochlorococcus marinus (strain SARG / CCMP1375 / SS120).